The chain runs to 662 residues: Probable dolichyl-phosphate-mannose--protein mannosyltransferase 7 (662 aa).

Topologically, residues 1–26 are lumenal; sequence MKDLRLQGPYRKYIPYNIFQQCGIGH. A helical transmembrane segment spans residues 27 to 47; that stretch reads LKTLDYIFAFLIVITNFTLIW. Over 48 to 159 the chain is Cytoplasmic; the sequence is KSHSSSFWNR…GTIISFDSLE (112 aa). The helical transmembrane segment at 160-180 threads the bilayer; sequence WCLFSVVIYSFISISIAKLGT. Residues 181–195 lie on the Lumenal side of the membrane; sequence TNWFANVITLSISLG. A helical membrane pass occupies residues 196-216; the sequence is LAISSKFIGIVTWAFVILSFV. Over 217–235 the chain is Cytoplasmic; it reads RQFDRLISDVKVTTIQIIK. A helical transmembrane segment spans residues 236–256; the sequence is FVILCLLFVLIIPGSIFIISY. Residues 257–482 are Lumenal-facing; sequence SNLLSNFKTD…MEYPVIPRTT (226 aa). Residues 289 to 344 enclose the MIR 1 domain; sequence PSRLYYGSTITLRHLDSMVGYLASHDISYPSDVDEQLVALSFEEFAADNEWLIEHP. N-linked (GlcNAc...) asparagine glycosylation is present at asparagine 347. MIR domains follow at residues 359–418 and 432–488; these read LIPV…VLLI and DKYI…IDSV. Residues 483–503 traverse the membrane as a helical segment; it reads FLIDSVQLPVDFQVPMIEYYI. At 504 to 565 the chain is on the cytoplasmic side; that stretch reads GKISSSAEFN…KWPITLDTDS (62 aa). A helical transmembrane segment spans residues 566–586; the sequence is PVWFNFAWYGSLLSMIIFMCV. The Lumenal portion of the chain corresponds to 587-617; it reads QCKRMISWNPWTTAEPSFSIKWEVYNEFGWE. Residues 618-638 traverse the membrane as a helical segment; it reads CIVGWFLHFYIFTMSPHFNLG. Residues 639–662 are Cytoplasmic-facing; that stretch reads KKLYFQSFFFSVLCLLESLDCLAK.

It belongs to the glycosyltransferase 39 family.

It is found in the endoplasmic reticulum membrane. The catalysed reaction is a di-trans,poly-cis-dolichyl beta-D-mannosyl phosphate + L-seryl-[protein] = 3-O-(alpha-D-mannosyl)-L-seryl-[protein] + a di-trans,poly-cis-dolichyl phosphate + H(+). It catalyses the reaction a di-trans,poly-cis-dolichyl beta-D-mannosyl phosphate + L-threonyl-[protein] = 3-O-(alpha-D-mannosyl)-L-threonyl-[protein] + a di-trans,poly-cis-dolichyl phosphate + H(+). The protein operates within protein modification; protein glycosylation. In terms of biological role, probable protein O-mannosyltransferase involved in O-glycosylation which is essential for cell wall rigidity. Transfers mannose from Dol-P-mannose to Ser or Thr residues on proteins. This chain is Probable dolichyl-phosphate-mannose--protein mannosyltransferase 7, found in Saccharomyces cerevisiae (strain ATCC 204508 / S288c) (Baker's yeast).